The sequence spans 340 residues: Glycerol-3-phosphate dehydrogenase [NAD(P)+] (340 aa).

Positions 14, 15, 35, and 108 each coordinate NADPH. Sn-glycerol 3-phosphate contacts are provided by lysine 108 and glycine 136. Alanine 140 lines the NADPH pocket. Lysine 191, aspartate 244, serine 254, arginine 255, and asparagine 256 together coordinate sn-glycerol 3-phosphate. The Proton acceptor role is filled by lysine 191. Arginine 255 contacts NADPH. Glutamate 281 contributes to the NADPH binding site.

It belongs to the NAD-dependent glycerol-3-phosphate dehydrogenase family.

The protein localises to the cytoplasm. It carries out the reaction sn-glycerol 3-phosphate + NAD(+) = dihydroxyacetone phosphate + NADH + H(+). The catalysed reaction is sn-glycerol 3-phosphate + NADP(+) = dihydroxyacetone phosphate + NADPH + H(+). Its pathway is membrane lipid metabolism; glycerophospholipid metabolism. Catalyzes the reduction of the glycolytic intermediate dihydroxyacetone phosphate (DHAP) to sn-glycerol 3-phosphate (G3P), the key precursor for phospholipid synthesis. This is Glycerol-3-phosphate dehydrogenase [NAD(P)+] from Pseudomonas aeruginosa (strain ATCC 15692 / DSM 22644 / CIP 104116 / JCM 14847 / LMG 12228 / 1C / PRS 101 / PAO1).